The chain runs to 156 residues: Small ribosomal subunit protein uS7 (156 aa).

This sequence belongs to the universal ribosomal protein uS7 family. As to quaternary structure, part of the 30S ribosomal subunit. Contacts proteins S9 and S11.

One of the primary rRNA binding proteins, it binds directly to 16S rRNA where it nucleates assembly of the head domain of the 30S subunit. Is located at the subunit interface close to the decoding center, probably blocks exit of the E-site tRNA. The protein is Small ribosomal subunit protein uS7 of Rhodopseudomonas palustris (strain BisB5).